The chain runs to 465 residues: Adenosylhomocysteinase (465 aa).

3 residues coordinate substrate: Thr56, Asp131, and Glu191. 192–194 provides a ligand contact to NAD(+); it reads TTT. Substrate-binding residues include Lys221 and Asp225. Residues Asn226, 255–260, Glu278, Asn313, 334–336, and Asn379 each bind NAD(+); these read GYGNVG and IGH.

Belongs to the adenosylhomocysteinase family. It depends on NAD(+) as a cofactor.

It is found in the cytoplasm. The enzyme catalyses S-adenosyl-L-homocysteine + H2O = L-homocysteine + adenosine. It participates in amino-acid biosynthesis; L-homocysteine biosynthesis; L-homocysteine from S-adenosyl-L-homocysteine: step 1/1. Its function is as follows. May play a key role in the regulation of the intracellular concentration of adenosylhomocysteine. The sequence is that of Adenosylhomocysteinase from Bartonella quintana (strain Toulouse) (Rochalimaea quintana).